A 510-amino-acid chain; its full sequence is Cytochrome P450 monooxygenase AFLA_114810 (510 aa).

Positions 1–17 (MLILLGLLCLYTGLYVA) are cleaved as a signal peptide. Residue cysteine 444 participates in heme binding.

The protein belongs to the cytochrome P450 family. Heme serves as cofactor.

It functions in the pathway secondary metabolite biosynthesis. In terms of biological role, cytochrome P450 monooxygenase; part of the gene cluster 41 that mediates the biosynthesis of an extracellular and diffusible metabolite that is able to stimulate colony sclerotial production. The sequence is that of Cytochrome P450 monooxygenase AFLA_114810 from Aspergillus flavus (strain ATCC 200026 / FGSC A1120 / IAM 13836 / NRRL 3357 / JCM 12722 / SRRC 167).